Here is a 180-residue protein sequence, read N- to C-terminus: Bifunctional protein PyrR (180 aa).

The short motif at V101–T113 is the PRPP-binding element.

This sequence belongs to the purine/pyrimidine phosphoribosyltransferase family. PyrR subfamily. As to quaternary structure, homodimer and homohexamer; in equilibrium.

It catalyses the reaction UMP + diphosphate = 5-phospho-alpha-D-ribose 1-diphosphate + uracil. In terms of biological role, regulates transcriptional attenuation of the pyrimidine nucleotide (pyr) operon by binding in a uridine-dependent manner to specific sites on pyr mRNA. This disrupts an antiterminator hairpin in the RNA and favors formation of a downstream transcription terminator, leading to a reduced expression of downstream genes. Also displays a weak uracil phosphoribosyltransferase activity which is not physiologically significant. In Bacillus mycoides (strain KBAB4) (Bacillus weihenstephanensis), this protein is Bifunctional protein PyrR.